The chain runs to 1254 residues: Protein transport protein Sec31A (1254 aa).

WD repeat units follow at residues 4–47 (KEIN…EIFE), 64–111 (SSPH…AGDS), 120–160 (KHTG…SPMT), 166–206 (QPQE…LIIK), 209–254 (DHSN…SPLK), 258–298 (NHTR…VLYE), and 301–341 (TSTQ…NDNA). Residues 364 to 383 (TLPPLQLPQQTSPQSTITPL) are compositionally biased toward low complexity. A disordered region spans residues 364–386 (TLPPLQLPQQTSPQSTITPLKKP). Residues 397–428 (SFAFGGKLVTLDNIKPTAQQPQQTAAHVVHIS) form a WD 8; interaction with SEC13 repeat. Disordered stretches follow at residues 818–892 (PMQT…QSPA), 983–1008 (CFQHGGPGSPTSYLPPPGARAPGTQH), and 1058–1125 (PPAP…PGAP). Over residues 832–846 (AQPAAPAVPPQYYQQ) the composition is skewed to low complexity. Polar residues-rich tracts occupy residues 847–863 (GRSATTVTSWSNQTPTA) and 872–881 (VPSSDPQGDS). Residues 1080–1091 (QTLQPQQQVPDQ) are compositionally biased toward low complexity.

The protein belongs to the WD repeat SEC31 family. As to quaternary structure, COPII is composed of at least 5 proteins: the SEC23/24 complex, the SEC13/31 complex and SAR1. SEC13 and SEC31 make a 2:2 tetramer that forms the edge element of the COPII outer coat. The tetramer self-assembles in multiple copies to form the complete polyhedral cage. Interacts (via WD 8) with SEC13.

Its subcellular location is the cytoplasm. It is found in the cytoplasmic vesicle. It localises to the COPII-coated vesicle membrane. The protein localises to the endoplasmic reticulum membrane. Its function is as follows. Component of the coat protein complex II (COPII) which promotes the formation of transport vesicles from the endoplasmic reticulum (ER). The coat has two main functions, the physical deformation of the endoplasmic reticulum membrane into vesicles and the selection of cargo molecules. In Danio rerio (Zebrafish), this protein is Protein transport protein Sec31A (sec31a).